The primary structure comprises 45 residues: Defensin Tk-AMP-D4 (45 aa).

4 cysteine pairs are disulfide-bonded: Cys3/Cys45, Cys14/Cys34, Cys20/Cys39, and Cys24/Cys41.

Functionally, plant defense peptide. The chain is Defensin Tk-AMP-D4 from Triticum kiharae (Wheat).